We begin with the raw amino-acid sequence, 490 residues long: GTPase Der (490 aa).

2 EngA-type G domains span residues 3–166 (PVVA…AEAM) and 200–373 (IKLA…DSAT). GTP contacts are provided by residues 9–16 (GRPNVGKS), 56–60 (DTGGI), 118–121 (NKVD), 206–213 (GKPNVGKS), 253–257 (DTAGV), and 318–321 (NKWD). In terms of domain architecture, KH-like spans 374-458 (RRVSTSMLTR…PIQLRFQEGG (85 aa)).

It belongs to the TRAFAC class TrmE-Era-EngA-EngB-Septin-like GTPase superfamily. EngA (Der) GTPase family. In terms of assembly, associates with the 50S ribosomal subunit.

Its function is as follows. GTPase that plays an essential role in the late steps of ribosome biogenesis. The sequence is that of GTPase Der from Shewanella halifaxensis (strain HAW-EB4).